The primary structure comprises 285 residues: Energy-coupling factor transporter ATP-binding protein EcfA2 (285 aa).

Residues 3 to 245 (INFEQVNFSY…DLVWFKTVAL (243 aa)) form the ABC transporter domain. 40–47 (GQTGSGKS) contacts ATP. Glu171 functions as the Proton acceptor in the catalytic mechanism.

Belongs to the ABC transporter superfamily. Energy-coupling factor EcfA family. As to quaternary structure, forms a stable energy-coupling factor (ECF) transporter complex probably composed of 2 membrane-embedded substrate-binding proteins (S component), 2 ATP-binding proteins (A component) and 2 transmembrane proteins (T component). This complex interacts with a number of substrate-specific components, including FolT, PanT and RibU for 5-formyltetrahydrofolate, pantothenate and riboflavin respectively.

It localises to the cell membrane. Functionally, ATP-binding (A) component of a common energy-coupling factor (ECF) ABC-transporter complex. Unlike classic ABC transporters this ECF transporter provides the energy necessary to transport a number of different substrates including 5-formyltetrahydrofolate, pantothenate and riboflavin. Expression of the complex plus FolT in E.coli allows 5-formyltetrahydrofolate uptake; 5-formyltetrahydrofolate is not taken up in the absence of FolT or the EcfA1A2T complex. This Leuconostoc mesenteroides subsp. mesenteroides (strain ATCC 8293 / DSM 20343 / BCRC 11652 / CCM 1803 / JCM 6124 / NCDO 523 / NBRC 100496 / NCIMB 8023 / NCTC 12954 / NRRL B-1118 / 37Y) protein is Energy-coupling factor transporter ATP-binding protein EcfA2.